A 149-amino-acid polypeptide reads, in one-letter code: MKTYSATPKDIDRRWYVVDAEGMVLGRLASEVAKIIRGKHKPMYTPHMDTGDFVIVINASKVQVTGRKAEQKTYFSHTGYMGHEKHTPFASVLAKHPERVIEKAVYGMLPKTALGRQVLRRKLRVFAGAEHPHIAQSPAALTFSSAEAK.

This sequence belongs to the universal ribosomal protein uL13 family. As to quaternary structure, part of the 50S ribosomal subunit.

This protein is one of the early assembly proteins of the 50S ribosomal subunit, although it is not seen to bind rRNA by itself. It is important during the early stages of 50S assembly. The polypeptide is Large ribosomal subunit protein uL13 (Gemmatimonas aurantiaca (strain DSM 14586 / JCM 11422 / NBRC 100505 / T-27)).